We begin with the raw amino-acid sequence, 848 residues long: Translation initiation factor IF-2 (848 aa).

The disordered stretch occupies residues 1 to 20; the sequence is MNESKGAVDSGLMSGKTERT. A tr-type G domain is found at 346–516; that stretch reads PRAPVVTVMG…LLMAELLELK (171 aa). The interval 355-362 is G1; that stretch reads GHVDHGKT. Residue 355–362 coordinates GTP; the sequence is GHVDHGKT. The segment at 380–384 is G2; the sequence is GITQH. A G3 region spans residues 402–405; that stretch reads DTPG. GTP-binding positions include 402–406 and 456–459; these read DTPGH and NKID. The segment at 456-459 is G4; it reads NKID. A G5 region spans residues 492–494; sequence SAK.

It belongs to the TRAFAC class translation factor GTPase superfamily. Classic translation factor GTPase family. IF-2 subfamily.

The protein resides in the cytoplasm. In terms of biological role, one of the essential components for the initiation of protein synthesis. Protects formylmethionyl-tRNA from spontaneous hydrolysis and promotes its binding to the 30S ribosomal subunits. Also involved in the hydrolysis of GTP during the formation of the 70S ribosomal complex. This is Translation initiation factor IF-2 from Ehrlichia canis (strain Jake).